The following is a 44-amino-acid chain: Photosystem I reaction center subunit IX (44 aa).

Residues Phe9–Ile29 traverse the membrane as a helical segment.

This sequence belongs to the PsaJ family.

It localises to the cellular thylakoid membrane. May help in the organization of the PsaE and PsaF subunits. The protein is Photosystem I reaction center subunit IX of Prochlorococcus marinus subsp. pastoris (strain CCMP1986 / NIES-2087 / MED4).